A 94-amino-acid chain; its full sequence is Large ribosomal subunit protein bL31 (94 aa).

The interval 65-94 (YGMADSENDSTDKKKTTNEKKVSDSPSKES) is disordered. The span at 74–94 (STDKKKTTNEKKVSDSPSKES) shows a compositional bias: basic and acidic residues.

Belongs to the bacterial ribosomal protein bL31 family. Type A subfamily. In terms of assembly, part of the 50S ribosomal subunit.

Binds the 23S rRNA. The sequence is that of Large ribosomal subunit protein bL31 from Prochlorococcus marinus (strain MIT 9211).